The primary structure comprises 464 residues: Kynureninase (464 aa).

Met1 bears the N-acetylmethionine mark. Pyridoxal 5'-phosphate-binding positions include Leu137, Thr138, 165 to 168 (FPSD), Ser221, Asp250, His253, and Tyr275. At Lys276 the chain carries N6-(pyridoxal phosphate)lysine. Residues Trp305 and Asn333 each coordinate pyridoxal 5'-phosphate.

Belongs to the kynureninase family. Homodimer. Pyridoxal 5'-phosphate is required as a cofactor. As to expression, high levels in liver and kidney. Also detected in heart, retina, ovary. Lung, testis and brain.

It localises to the cytoplasm. Its subcellular location is the cytosol. It catalyses the reaction L-kynurenine + H2O = anthranilate + L-alanine + H(+). The enzyme catalyses 3-hydroxy-L-kynurenine + H2O = 3-hydroxyanthranilate + L-alanine + H(+). The protein operates within amino-acid degradation; L-kynurenine degradation; L-alanine and anthranilate from L-kynurenine: step 1/1. It functions in the pathway cofactor biosynthesis; NAD(+) biosynthesis; quinolinate from L-kynurenine: step 2/3. Inhibited by o-methylbenzoylalanine (OMBA). In terms of biological role, catalyzes the cleavage of L-kynurenine (L-Kyn) and L-3-hydroxykynurenine (L-3OHKyn) into anthranilic acid (AA) and 3-hydroxyanthranilic acid (3-OHAA), respectively. Has a preference for the L-3-hydroxy form. Also has cysteine-conjugate-beta-lyase activity. In Rattus norvegicus (Rat), this protein is Kynureninase (Kynu).